Reading from the N-terminus, the 465-residue chain is MNEAFDCVVIGAGPGGYVAAITAAQAGLKTALIEKREAGGTCLNRGCIPSKALLAGAEVVTQIRHADQFGIHVEGFSINYPAMVQRKDSVVRSIRDGLNGLIRSNKITVFSGRGSLISSTEVKILGENPSVIKAHSIILATGSEPRAFPGIPFSAESPRILCSTGVLNLKEIPQKMAIIGGGVIGCEFASLFHTLGSEVSVIEASSQILALNNPDISKTMFDKFTRQGLRFVLEASVSNIEDIGDRVRLTINGNVEEYDYVLVSIGRRLNTENIGLDKAGVICDERGVIPTDATMRTNVPNIYAIGDITGKWQLAHVASHQGIIAARNIAGHKEEIDYSAVPSVIFTFPEVASVGLSPTAAQQQKIPVKVTKFPFRAIGKAVAMGEADGFAAIISHETTQQILGAYVIGPHASSLISEITLAVRNELTLPCIYETIHAHPTLAEVWAESALLAVDTPLHMPPAKK.

Residues 34–42 (EKREAGGTC), Lys-51, and Gly-114 each bind FAD. The cysteines at positions 42 and 47 are disulfide-linked. Residues 180–184 (GGGVI), Glu-203, Val-237, and 264–267 (SIGR) each bind NAD(+). Residues Asp-307 and Ala-315 each coordinate FAD. His-439 serves as the catalytic Proton acceptor.

This sequence belongs to the class-I pyridine nucleotide-disulfide oxidoreductase family. Requires FAD as cofactor.

It localises to the cytoplasm. The enzyme catalyses N(6)-[(R)-dihydrolipoyl]-L-lysyl-[protein] + NAD(+) = N(6)-[(R)-lipoyl]-L-lysyl-[protein] + NADH + H(+). In terms of biological role, the branched-chain alpha-keto dehydrogenase complex catalyzes the overall conversion of alpha-keto acids to acyl-CoA and CO(2). It contains multiple copies of 3 enzymatic components: branched-chain alpha-keto acid decarboxylase (E1), lipoamide acyltransferase (E2) and lipoamide dehydrogenase (E3). This Chlamydia trachomatis serovar D (strain ATCC VR-885 / DSM 19411 / UW-3/Cx) protein is Dihydrolipoyl dehydrogenase (lpdA).